The chain runs to 260 residues: 3'-5' ssDNA/RNA exonuclease TatD (260 aa).

Residues E92, H128, and H153 each coordinate a divalent metal cation.

This sequence belongs to the metallo-dependent hydrolases superfamily. TatD-type hydrolase family. TatD subfamily. As to quaternary structure, monomer. Requires Mg(2+) as cofactor.

The protein localises to the cytoplasm. 3'-5' exonuclease that prefers single-stranded DNA and RNA. May play a role in the H(2)O(2)-induced DNA damage repair. In Pantoea sp. (strain At-9b), this protein is 3'-5' ssDNA/RNA exonuclease TatD.